Here is a 224-residue protein sequence, read N- to C-terminus: Large ribosomal subunit protein uL16z (224 aa).

The protein belongs to the universal ribosomal protein uL16 family. Component of the small ribosomal subunit. Mature ribosomes consist of a small (40S) and a large (60S) subunit. The 40S subunit contains about 33 different proteins and 1 molecule of RNA (18S). The 60S subunit contains about 49 different proteins and 3 molecules of RNA (25S, 5.8S and 5S).

In Oryza sativa subsp. indica (Rice), this protein is Large ribosomal subunit protein uL16z (SC34).